The sequence spans 1701 residues: Merozoite surface protein 1 (1701 aa).

The signal sequence occupies residues 1–19 (MKIIFFLCSFLFFIINTQC). Residues 89 to 100 (GSGGSVASGGSG) show a composition bias toward gly residues. Positions 89 to 118 (GSGGSVASGGSGNSRRTNPSDNSSDSNTKT) are disordered. Low complexity predominate over residues 101 to 116 (NSRRTNPSDNSSDSNT). 2 N-linked (GlcNAc...) asparagine glycosylation sites follow: asparagine 110 and asparagine 239. A disordered region spans residues 322-344 (DAENPTTGSKPNPLPENKKKEVE). 3 N-linked (GlcNAc...) asparagine glycosylation sites follow: asparagine 470, asparagine 536, and asparagine 607. The segment at 704–739 (SETTEDGGHSTHTLSQSGETEVTEETEVTEETVGHT) is disordered. Residues 724–733 (EVTEETEVTE) are compositionally biased toward acidic residues. N-linked (GlcNAc...) asparagine glycans are attached at residues asparagine 802, asparagine 899, asparagine 919, asparagine 965, asparagine 991, asparagine 1089, and asparagine 1196. Low complexity predominate over residues 889–927 (TGTSSTSSPGNTTVNTAQSATHSNSQNQQSNASSTNTQN). The interval 889–936 (TGTSSTSSPGNTTVNTAQSATHSNSQNQQSNASSTNTQNGVAVSSGPA) is disordered. Disordered stretches follow at residues 1231 to 1259 (PPQP…TQIP) and 1451 to 1472 (KEKF…DEQK). Positions 1245–1259 (VSGSSGSTKEETQIP) are enriched in polar residues. Positions 1456–1465 (SSPPTTPPSP) are enriched in pro residues. N-linked (GlcNAc...) asparagine glycosylation occurs at asparagine 1588. EGF-like domains follow at residues 1592–1632 (HQCV…VENP) and 1633–1680 (NPTC…IFCS). Cystine bridges form between cysteine 1594–cysteine 1605, cysteine 1599–cysteine 1615, cysteine 1617–cysteine 1628, cysteine 1636–cysteine 1649, cysteine 1643–cysteine 1663, and cysteine 1665–cysteine 1679. A lipid anchor (GPI-anchor amidated serine) is attached at serine 1680. Residues 1681–1701 (SSNFLGISFLLILMLILYSFI) constitute a propeptide, removed in mature form.

Forms a complex composed of subunits p83, p30, p38, and p42 which remain non-covalently associated; the complex is formed at the merozoite surface prior to egress from host erythrocytes. Forms a complex composed of processed MSP1 subunits, MSP6 subunit p36 and MSP7; the complex is formed at the merozoite surface prior to egress from host erythrocytes. Within the complex, interacts (via subunit p38) with MSP6 subunit p36 and (via subunits p83, p30 and p38) with MSP7 (via subunit p22). Forms a complex composed of MSP1, MSP6, DBLMSP1 and DBLMSP2. Within the complex, interacts (via subunit p38) with DBLMSP1 and DBLMSP2. Forms a complex composed of MSP1, and rhoptry proteins RhopH3, RAP1 and CLAG9/RhopH3. Within the complex, interacts (via subunits p42 and p19) with RhopH3 (via C-terminus). Forms a complex composed of MSP1, MSP6, MSP7, MSP9 and MSP3; within the complex, MSP6 and MSP9 mediate the binding to the host erythrocyte. Interacts (via subunits p19 and p42) with MSP9; the interaction is direct; MSP1 subunits p19 or p42, and MSP9 form a co-ligand complex that interacts with host SLC4A1/Band 3 protein. May interact with PFD6. Interacts with host spectrin. In terms of assembly, interacts with host glycophorin GYPA in a sialic acid-independent manner. As to quaternary structure, interacts with host proinflammatory cytokine S100P; the interaction blocks S100P inflammatory and chemotactic activities. Interacts with host SLC4A1/Band 3 (via 5ABC region) on the host erythrocyte surface in a sialic acid-independent manner. The p190 precursor is cleaved by SUB1 prior to merozoite egress into 4 subunits p83, p30, p38, and p42 which remain non-covalently associated. SUB1-mediated proteolytic cleavage occurs in an orderly manner; the first cleavage occurs at the p30/p38 site, followed by cleavage at the p83/p30 site, in the 3D7 strain a second cleavage occurs at the N-terminus of p83, the last cleavage occurs at the p38/p42 site. The order of cleavage is essential for parasite viability. SUB1-mediated processing is essential for merozoite egress. In a second processing step during erythrocyte invasion, p42 is cleaved by SUB2 into p33 and p19; the latter remains attached to the merozoite surface via its GPI-anchor and is endocytosed during the subsequent ring stage.

The protein resides in the cell membrane. The protein localises to the secreted. Its subcellular location is the vacuole membrane. Functionally, during the asexual blood stage, involved in merozoite egress from host erythrocytes possibly via its interaction with the host cytoskeleton protein spectrin resulting in the destabilization of the host cytoskeleton and thus leading to erythrocyte cell membrane rupture. Involved in the binding to host erythrocytes and is required for host erythrocyte invasion. In terms of biological role, by binding to host proinflammatory cytokine S100P may interfere with host immune responses. Its function is as follows. Involved in merozoite invasion of host erythrocytes. May play a role in the biogenesis and/or function of the food vacuole during the intraerythrocytic development. The protein is Merozoite surface protein 1 of Plasmodium falciparum (isolate FC27 / Papua New Guinea).